A 191-amino-acid chain; its full sequence is 3-isopropylmalate dehydratase small subunit (191 aa).

This sequence belongs to the LeuD family. LeuD type 1 subfamily. As to quaternary structure, heterodimer of LeuC and LeuD.

The catalysed reaction is (2R,3S)-3-isopropylmalate = (2S)-2-isopropylmalate. The protein operates within amino-acid biosynthesis; L-leucine biosynthesis; L-leucine from 3-methyl-2-oxobutanoate: step 2/4. Its function is as follows. Catalyzes the isomerization between 2-isopropylmalate and 3-isopropylmalate, via the formation of 2-isopropylmaleate. The protein is 3-isopropylmalate dehydratase small subunit of Solibacter usitatus (strain Ellin6076).